Consider the following 732-residue polypeptide: Inducible ornithine decarboxylase (732 aa).

Residue lysine 355 is modified to N6-(pyridoxal phosphate)lysine.

The protein belongs to the Orn/Lys/Arg decarboxylase class-I family. Pyridoxal 5'-phosphate serves as cofactor.

It catalyses the reaction L-ornithine + H(+) = putrescine + CO2. It participates in amine and polyamine biosynthesis; putrescine biosynthesis via L-ornithine pathway; putrescine from L-ornithine: step 1/1. In terms of biological role, the first enzyme leading to putrescine and thus polyamine synthesis. The polypeptide is Inducible ornithine decarboxylase (Escherichia coli (strain K12)).